The following is an 812-amino-acid chain: Probable inorganic carbon transporter subunit DabA (812 aa).

4 residues coordinate Zn(2+): C337, D339, H499, and C514.

This sequence belongs to the inorganic carbon transporter (TC 9.A.2) DabA family. In terms of assembly, forms a complex with DabB. The cofactor is Zn(2+).

The protein resides in the cell inner membrane. In terms of biological role, part of an energy-coupled inorganic carbon pump. This chain is Probable inorganic carbon transporter subunit DabA, found in Xanthomonas oryzae pv. oryzae (strain KACC10331 / KXO85).